The primary structure comprises 790 residues: Nuclear cap-binding protein subunit 1 (790 aa).

Residues 1 to 26 (MSRRRHSYENDGGQPHKRRKTSDANE) are disordered. Positions 3–20 (RRRHSYENDGGQPHKRRK) match the Nuclear localization signal motif. S7 is modified (phosphoserine). T21 is subject to Phosphothreonine. A phosphoserine mark is found at S22 and S201. An MIF4G domain is found at 28–240 (EDHLESLICK…CLWAQIQKLK (213 aa)). Position 204 is an N6-acetyllysine (K204). A coiled-coil region spans residues 643 to 713 (STIRKMNKHV…SEQKNLFLVI (71 aa)). K684 is covalently cross-linked (Glycyl lysine isopeptide (Lys-Gly) (interchain with G-Cter in SUMO2)). An N6-acetyllysine modification is found at K698.

This sequence belongs to the NCBP1 family. Component of the nuclear cap-binding complex (CBC), a heterodimer composed of NCBP1/CBP80 and NCBP2/CBP20 that interacts with m7GpppG-capped RNA. Found in a U snRNA export complex containing PHAX/RNUXA, NCBP1/CBP80, NCBP2/CBP20, RAN, XPO1 and m7G-capped RNA. Identified in a IGF2BP1-dependent mRNP granule complex containing untranslated mRNAs. Interacts with PHAX/RNUXA, SRRT/ARS2, EIF4G2, IGF2BP1, HNRNPF, HNRNPH1, KIAA0427/CTIF, PARN, DROSHA, UPF1 and ALYREF/THOC4. May interact with EIF4G1; the interaction is however controversial since it is reported by, and, but is not observed by. The large PER complex involved in the repression of transcriptional termination is composed of at least PER2, CDK9, DDX5, DHX9, NCBP1/CBP80 and POLR2A. Component of an alternative nuclear cap-binding complex (CBC) composed of NCBP1/CBP80 and NCBP3. Interacts with METTL3. Interacts with ZFC3H1 in a RNase-insensitive manner. Interacts with MTREX. Interacts with TASOR. Interacts with DHX34; the interaction is RNA-dependent. Interacts with KPNA3. In terms of processing, dephosphorylated at Thr-21 by the PNUTS-PP1 complex during RNA polymerase II transcription pause-release.

Its subcellular location is the nucleus. The protein resides in the cytoplasm. Functionally, component of the cap-binding complex (CBC), which binds cotranscriptionally to the 5'-cap of pre-mRNAs and is involved in various processes such as pre-mRNA splicing, translation regulation, nonsense-mediated mRNA decay, RNA-mediated gene silencing (RNAi) by microRNAs (miRNAs) and mRNA export. The CBC complex is involved in mRNA export from the nucleus via its interaction with ALYREF/THOC4/ALY, leading to the recruitment of the mRNA export machinery to the 5'-end of mRNA and to mRNA export in a 5' to 3' direction through the nuclear pore. The CBC complex is also involved in mediating U snRNA and intronless mRNAs export from the nucleus. The CBC complex is essential for a pioneer round of mRNA translation, before steady state translation when the CBC complex is replaced by cytoplasmic cap-binding protein eIF4E. The pioneer round of mRNA translation mediated by the CBC complex plays a central role in nonsense-mediated mRNA decay (NMD), NMD only taking place in mRNAs bound to the CBC complex, but not on eIF4E-bound mRNAs. The CBC complex enhances NMD in mRNAs containing at least one exon-junction complex (EJC) via its interaction with UPF1, promoting the interaction between UPF1 and UPF2. The CBC complex is also involved in 'failsafe' NMD, which is independent of the EJC complex, while it does not participate in Staufen-mediated mRNA decay (SMD). During cell proliferation, the CBC complex is also involved in microRNAs (miRNAs) biogenesis via its interaction with SRRT/ARS2 and is required for miRNA-mediated RNA interference. The CBC complex also acts as a negative regulator of PARN, thereby acting as an inhibitor of mRNA deadenylation. In the CBC complex, NCBP1/CBP80 does not bind directly capped RNAs (m7GpppG-capped RNA) but is required to stabilize the movement of the N-terminal loop of NCBP2/CBP20 and lock the CBC into a high affinity cap-binding state with the cap structure. Associates with NCBP3 to form an alternative cap-binding complex (CBC) which plays a key role in mRNA export and is particularly important in cellular stress situations such as virus infections. The conventional CBC with NCBP2 binds both small nuclear RNA (snRNA) and messenger (mRNA) and is involved in their export from the nucleus whereas the alternative CBC with NCBP3 does not bind snRNA and associates only with mRNA thereby playing a role only in mRNA export. NCBP1/CBP80 is required for cell growth and viability. The sequence is that of Nuclear cap-binding protein subunit 1 (Ncbp1) from Rattus norvegicus (Rat).